A 172-amino-acid chain; its full sequence is Photosystem I assembly protein Ycf3 (172 aa).

TPR repeat units follow at residues 35–68 (AFSYYRDGMSAQSEGEYAEALENYYEALRLEEDP), 72–105 (SYILYNIGLIYASNGEYVKALEYYHQALDLNSQL), and 120–153 (GVKASEKKELDLARTLFDKAAEYWKQAIRLSPNN).

The protein belongs to the Ycf3 family.

It localises to the plastid. The protein resides in the chloroplast thylakoid membrane. Its function is as follows. Essential for the assembly of the photosystem I (PSI) complex. May act as a chaperone-like factor to guide the assembly of the PSI subunits. This is Photosystem I assembly protein Ycf3 from Guillardia theta (Cryptophyte).